Consider the following 66-residue polypeptide: DNA-directed RNA polymerase subunit Rpo10 (66 aa).

Positions 7, 10, 47, and 48 each coordinate Zn(2+).

This sequence belongs to the archaeal Rpo10/eukaryotic RPB10 RNA polymerase subunit family. In terms of assembly, part of the RNA polymerase complex. The cofactor is Zn(2+).

It localises to the cytoplasm. The catalysed reaction is RNA(n) + a ribonucleoside 5'-triphosphate = RNA(n+1) + diphosphate. DNA-dependent RNA polymerase (RNAP) catalyzes the transcription of DNA into RNA using the four ribonucleoside triphosphates as substrates. This Halobacterium salinarum (strain ATCC 29341 / DSM 671 / R1) protein is DNA-directed RNA polymerase subunit Rpo10.